A 394-amino-acid polypeptide reads, in one-letter code: Phosphoglycerate kinase (394 aa).

Residues 21-23 (DLN), R36, 59-62 (HLGR), R113, and R146 contribute to the substrate site. ATP contacts are provided by residues K197, E319, and 345-348 (GGDT).

This sequence belongs to the phosphoglycerate kinase family. In terms of assembly, monomer.

Its subcellular location is the cytoplasm. It catalyses the reaction (2R)-3-phosphoglycerate + ATP = (2R)-3-phospho-glyceroyl phosphate + ADP. The protein operates within carbohydrate degradation; glycolysis; pyruvate from D-glyceraldehyde 3-phosphate: step 2/5. The chain is Phosphoglycerate kinase from Halorhodospira halophila (strain DSM 244 / SL1) (Ectothiorhodospira halophila (strain DSM 244 / SL1)).